Reading from the N-terminus, the 222-residue chain is Phosphoribosylformylglycinamidine synthase subunit PurQ (222 aa).

Residues 3 to 222 form the Glutamine amidotransferase type-1 domain; that stretch reads AAVVVFPGSN…RALAGALTPA (220 aa). C86 serves as the catalytic Nucleophile. Residues H194 and E196 contribute to the active site.

In terms of assembly, part of the FGAM synthase complex composed of 1 PurL, 1 PurQ and 2 PurS subunits.

The protein localises to the cytoplasm. It carries out the reaction N(2)-formyl-N(1)-(5-phospho-beta-D-ribosyl)glycinamide + L-glutamine + ATP + H2O = 2-formamido-N(1)-(5-O-phospho-beta-D-ribosyl)acetamidine + L-glutamate + ADP + phosphate + H(+). The enzyme catalyses L-glutamine + H2O = L-glutamate + NH4(+). Its pathway is purine metabolism; IMP biosynthesis via de novo pathway; 5-amino-1-(5-phospho-D-ribosyl)imidazole from N(2)-formyl-N(1)-(5-phospho-D-ribosyl)glycinamide: step 1/2. Its function is as follows. Part of the phosphoribosylformylglycinamidine synthase complex involved in the purines biosynthetic pathway. Catalyzes the ATP-dependent conversion of formylglycinamide ribonucleotide (FGAR) and glutamine to yield formylglycinamidine ribonucleotide (FGAM) and glutamate. The FGAM synthase complex is composed of three subunits. PurQ produces an ammonia molecule by converting glutamine to glutamate. PurL transfers the ammonia molecule to FGAR to form FGAM in an ATP-dependent manner. PurS interacts with PurQ and PurL and is thought to assist in the transfer of the ammonia molecule from PurQ to PurL. The protein is Phosphoribosylformylglycinamidine synthase subunit PurQ of Ruegeria pomeroyi (strain ATCC 700808 / DSM 15171 / DSS-3) (Silicibacter pomeroyi).